We begin with the raw amino-acid sequence, 129 residues long: Small ribosomal subunit protein uS8 (129 aa).

The protein belongs to the universal ribosomal protein uS8 family. Part of the 30S ribosomal subunit. Contacts proteins S5 and S12.

Functionally, one of the primary rRNA binding proteins, it binds directly to 16S rRNA central domain where it helps coordinate assembly of the platform of the 30S subunit. The sequence is that of Small ribosomal subunit protein uS8 from Colwellia psychrerythraea (strain 34H / ATCC BAA-681) (Vibrio psychroerythus).